The following is a 625-amino-acid chain: Mesothelin (625 aa).

The first 35 residues, 1–35 (MALPTAQPLLGSCGSPICSRSFLLLLLSLGWLPLL), serve as a signal peptide directing secretion. Position 202 is a phosphoserine (Ser-202). A disulfide bridge links Cys-304 with Cys-328. Asn-390, Asn-488, and Asn-517 each carry an N-linked (GlcNAc...) asparagine glycan. The GPI-anchor amidated serine moiety is linked to residue Ser-600. The propeptide at 601–625 (SGAPLLGPGFVFAWIPALLSALRLS) is removed in mature form.

The protein belongs to the mesothelin family. Interacts with MUC16. Post-translationally, proteolytically cleaved by a furin-like convertase to generate megakaryocyte-potentiating factor (MPF), and the cleaved form of mesothelin. In terms of tissue distribution, specifically expressed in lung. Overexpressed in hereditary renal carcinoma developed by Eker rats.

It is found in the cell membrane. The protein resides in the golgi apparatus. Its subcellular location is the secreted. Functionally, membrane-anchored forms may play a role in cellular adhesion. Its function is as follows. Megakaryocyte-potentiating factor (MPF) may potentiate megakaryocyte colony formation. The polypeptide is Mesothelin (Msln) (Rattus norvegicus (Rat)).